Consider the following 439-residue polypeptide: tRNA-2-methylthio-N(6)-dimethylallyladenosine synthase (439 aa).

An MTTase N-terminal domain is found at Lys2–Arg115. [4Fe-4S] cluster is bound by residues Cys11, Cys47, Cys78, Cys155, Cys159, and Cys162. One can recognise a Radical SAM core domain in the interval Asn141–Glu372. The 65-residue stretch at Gln375–His439 folds into the TRAM domain.

Belongs to the methylthiotransferase family. MiaB subfamily. As to quaternary structure, monomer. It depends on [4Fe-4S] cluster as a cofactor.

The protein localises to the cytoplasm. The enzyme catalyses N(6)-dimethylallyladenosine(37) in tRNA + (sulfur carrier)-SH + AH2 + 2 S-adenosyl-L-methionine = 2-methylsulfanyl-N(6)-dimethylallyladenosine(37) in tRNA + (sulfur carrier)-H + 5'-deoxyadenosine + L-methionine + A + S-adenosyl-L-homocysteine + 2 H(+). Functionally, catalyzes the methylthiolation of N6-(dimethylallyl)adenosine (i(6)A), leading to the formation of 2-methylthio-N6-(dimethylallyl)adenosine (ms(2)i(6)A) at position 37 in tRNAs that read codons beginning with uridine. This is tRNA-2-methylthio-N(6)-dimethylallyladenosine synthase from Wolbachia pipientis wMel.